Here is a 357-residue protein sequence, read N- to C-terminus: Actin, macronuclear (357 aa).

This sequence belongs to the actin family. Post-translationally, met-1 may be removed after translation.

It localises to the cytoplasm. It is found in the cytoskeleton. The enzyme catalyses ATP + H2O = ADP + phosphate + H(+). Actins are highly conserved proteins that are involved in various types of cell motility and are ubiquitously expressed in all eukaryotic cells. This chain is Actin, macronuclear, found in Oxytricha fallax.